We begin with the raw amino-acid sequence, 553 residues long: RNA exonuclease 1 (553 aa).

S24 is modified (phosphoserine). The stretch at 167–194 (MEKINKLKELQKKKKITINDLVLSEQQL) forms a coiled coil. The 149-residue stretch at 225-373 (IFALDCEMCL…EDARACLELT (149 aa)) folds into the Exonuclease domain. A coiled-coil region spans residues 509–533 (WNNLSTELEFIQDKKERLDKRRERE).

The protein belongs to the REXO1/REXO3 family.

The protein resides in the nucleus. Its function is as follows. 3' exoribonuclease required for 5S rRNA maturation and for the proper maturation of the 5' cistron of the tRNA-Arg3 dicistronic gene. Involved with REX2 in the maturation of the 5.8S rRNA, and with REX2 and REX3, in the 3' processing of the U5L snRNA. The sequence is that of RNA exonuclease 1 (RNH70) from Saccharomyces cerevisiae (strain ATCC 204508 / S288c) (Baker's yeast).